Reading from the N-terminus, the 638-residue chain is Signal recognition particle receptor subunit alpha (638 aa).

Disordered regions lie at residues 129 to 205 (KIRA…VELS), 218 to 245 (IQKHGRGLEKSSKSTKSDAPKEKGKKAP), and 262 to 315 (SAPT…ATKG). 2 stretches are compositionally biased toward basic and acidic residues: residues 137 to 146 (KKFEDSEKAK) and 153 to 165 (IETRGEKPKEKAK). The residue at position 177 (Ser-177) is a Phosphoserine. Positions 218 to 239 (IQKHGRGLEKSSKSTKSDAPKE) are enriched in basic and acidic residues. Phosphothreonine is present on Thr-284. A phosphoserine mark is found at Ser-296, Ser-297, and Ser-298. Polar residues predominate over residues 304–314 (AQNASKPSATK). The segment at 419 to 636 (YVVTFCGVNG…NAKAVVAALM (218 aa)) is NG domain. 425–432 (GVNGVGKS) provides a ligand contact to GTP. Position 473 is a phosphoserine (Ser-473). 520–524 (DTAGR) provides a ligand contact to GTP. A Phosphothreonine modification is found at Thr-578. 588-591 (TKFD) provides a ligand contact to GTP.

This sequence belongs to the GTP-binding SRP family. As to quaternary structure, heterodimer with SRPRB. Interacts with the signal recognition particle (SRP) complex subunit SRP54.

Its subcellular location is the endoplasmic reticulum membrane. Its function is as follows. Component of the SRP (signal recognition particle) receptor. Ensures, in conjunction with the signal recognition particle, the correct targeting of the nascent secretory proteins to the endoplasmic reticulum membrane system. Forms a guanosine 5'-triphosphate (GTP)-dependent complex with the SRP subunit SRP54. SRP receptor compaction and GTPase rearrangement drive SRP-mediated cotranslational protein translocation into the ER. The polypeptide is Signal recognition particle receptor subunit alpha (Canis lupus familiaris (Dog)).